Reading from the N-terminus, the 73-residue chain is Ocellatin-PT7 (73 aa).

The N-terminal stretch at 1 to 22 (MAFLKKSLFLVLFLGLVSLSIC) is a signal peptide. A propeptide spanning residues 23 to 39 (DEEKRQDEDDDDDDDEE) is cleaved from the precursor.

As to expression, expressed by the skin glands.

It localises to the secreted. In terms of biological role, has antibacterial activity against Gram-negative bacteria E.coli ATCC 25922 (MIC=60 uM) and S.choleraesuis ATCC 14028 (MIC=240 uM) and against Gram-positive bacterium S.aureus ATCC 29313 (MIC=240 uM). Shows no hemolytic activity and no cytotoxicity. The chain is Ocellatin-PT7 from Leptodactylus pustulatus (Ceara white-lipped frog).